The chain runs to 140 residues: Lipoprotein MlpD (140 aa).

The first 17 residues, Met-1 to Gly-17, serve as a signal peptide directing secretion. The N-palmitoyl cysteine moiety is linked to residue Cys-18. Cys-18 carries S-diacylglycerol cysteine lipidation. Positions Asp-22–Leu-53 are disordered. Over residues Lys-33–Leu-53 the composition is skewed to basic and acidic residues.

The protein belongs to the Multicopy lipoprotein (Mlp) family.

It localises to the cell outer membrane. An outer membrane protein that may participate in pathogenesis. Some human Lyme disease patients have antibodies against this protein. The Mlp proteins probably undergo intragenic recombination, generating new alleles. In Borreliella burgdorferi (strain ATCC 35210 / DSM 4680 / CIP 102532 / B31) (Borrelia burgdorferi), this protein is Lipoprotein MlpD.